The following is a 265-amino-acid chain: tRNA pseudouridine synthase A (265 aa).

The active-site Nucleophile is Asp-53. Tyr-111 lines the substrate pocket.

Belongs to the tRNA pseudouridine synthase TruA family. As to quaternary structure, homodimer.

The catalysed reaction is uridine(38/39/40) in tRNA = pseudouridine(38/39/40) in tRNA. Functionally, formation of pseudouridine at positions 38, 39 and 40 in the anticodon stem and loop of transfer RNAs. The chain is tRNA pseudouridine synthase A from Acinetobacter baumannii (strain ATCC 17978 / DSM 105126 / CIP 53.77 / LMG 1025 / NCDC KC755 / 5377).